The primary structure comprises 417 residues: Serine hydroxymethyltransferase (417 aa).

Residues L121 and 125–127 contribute to the (6S)-5,6,7,8-tetrahydrofolate site; that span reads GHL. K230 is modified (N6-(pyridoxal phosphate)lysine). Position 355–357 (355–357) interacts with (6S)-5,6,7,8-tetrahydrofolate; sequence SPF.

Belongs to the SHMT family. As to quaternary structure, homodimer. The cofactor is pyridoxal 5'-phosphate.

The protein localises to the cytoplasm. It carries out the reaction (6R)-5,10-methylene-5,6,7,8-tetrahydrofolate + glycine + H2O = (6S)-5,6,7,8-tetrahydrofolate + L-serine. It functions in the pathway one-carbon metabolism; tetrahydrofolate interconversion. It participates in amino-acid biosynthesis; glycine biosynthesis; glycine from L-serine: step 1/1. Its function is as follows. Catalyzes the reversible interconversion of serine and glycine with tetrahydrofolate (THF) serving as the one-carbon carrier. This reaction serves as the major source of one-carbon groups required for the biosynthesis of purines, thymidylate, methionine, and other important biomolecules. Also exhibits THF-independent aldolase activity toward beta-hydroxyamino acids, producing glycine and aldehydes, via a retro-aldol mechanism. The polypeptide is Serine hydroxymethyltransferase (Ruthia magnifica subsp. Calyptogena magnifica).